The primary structure comprises 305 residues: Mitochondrial thiamine pyrophosphate carrier 1 (305 aa).

6 consecutive transmembrane segments (helical) span residues 16–32 (VSPYESLLAGSISGAVA), 84–100 (ILYVLYGAAQFTTYSSI), 122–142 (LVSGTGAGVVSTLVTYPFDLL), 169–193 (GFTGLFAGIKPAMLSISTTTGLMFW), 213–229 (ICGFIAGATSKGITFPL), and 270–287 (GFGISVLKTSPTSAVSLF). Solcar repeat units lie at residues 16–103 (VSPY…ISRW), 116–201 (PSSA…VRET), and 206–295 (DIPF…SLAA).

This sequence belongs to the mitochondrial carrier (TC 2.A.29) family.

The protein localises to the mitochondrion inner membrane. Its function is as follows. Mitochondrial transporter that mediates uptake of thiamine pyrophosphate (ThPP) into mitochondria. The sequence is that of Mitochondrial thiamine pyrophosphate carrier 1 (TPC1) from Scheffersomyces stipitis (strain ATCC 58785 / CBS 6054 / NBRC 10063 / NRRL Y-11545) (Yeast).